Here is a 544-residue protein sequence, read N- to C-terminus: Chaperonin GroEL 2 (544 aa).

ATP contacts are provided by residues T29–P32, D86–T90, G413, N479–A481, and D495.

It belongs to the chaperonin (HSP60) family. In terms of assembly, forms a cylinder of 14 subunits composed of two heptameric rings stacked back-to-back. Interacts with the co-chaperonin GroES.

It is found in the cytoplasm. It carries out the reaction ATP + H2O + a folded polypeptide = ADP + phosphate + an unfolded polypeptide.. Functionally, together with its co-chaperonin GroES, plays an essential role in assisting protein folding. The GroEL-GroES system forms a nano-cage that allows encapsulation of the non-native substrate proteins and provides a physical environment optimized to promote and accelerate protein folding. The polypeptide is Chaperonin GroEL 2 (Prochlorococcus marinus (strain MIT 9515)).